Consider the following 308-residue polypeptide: MAMDNVTAVFQFLLIGISNYPQWRDTFFTLVLIIYLSTLLGNGFMIFLIHFDPNLHTPIYFFLSNLSFLDLCYGTASMPQALVHCFSTHPYLSYPRCLAQTSVSLALATAECLLLAAMAYDRVVAISNPLRYSVVMNGPVCVCLVATSWGTSLVLTAMLILSLRLHFCGANVINHFACEILSLIKLTCSDTSLNEFMILITSIFTLLLPFGFVLLSYIRIAMAIIRIRSLQGRLKAFTTCGSHLTVVTIFYGSAISMYMKTQSKSYPDQDKFISVFYGALTPMLNPLIYSLRKKDVKRAIRKVMLKRT.

The Extracellular segment spans residues M1–D25. An N-linked (GlcNAc...) asparagine glycan is attached at N5. The helical transmembrane segment at T26–I46 threads the bilayer. The Cytoplasmic portion of the chain corresponds to F47 to N54. Residues L55 to T75 traverse the membrane as a helical segment. The Extracellular portion of the chain corresponds to A76–A99. An intrachain disulfide couples C97 to C188. A helical membrane pass occupies residues Q100–Y120. Topologically, residues D121–P139 are cytoplasmic. Residues V140–L159 form a helical membrane-spanning segment. Residues I160 to F196 are Extracellular-facing. A helical transmembrane segment spans residues M197–S216. At Y217–A236 the chain is on the cytoplasmic side. The chain crosses the membrane as a helical span at residues F237 to M257. The Extracellular segment spans residues Y258–D270. Residues K271 to L291 form a helical membrane-spanning segment. The Cytoplasmic segment spans residues R292–T308.

The protein belongs to the G-protein coupled receptor 1 family.

The protein resides in the cell membrane. In terms of biological role, odorant receptor. The protein is Olfactory receptor 13H1 (OR13H1) of Homo sapiens (Human).